We begin with the raw amino-acid sequence, 331 residues long: UBX domain-containing protein 2B (331 aa).

Disordered stretches follow at residues 1–26 and 38–63; these read MAEG…SARD and EMKC…PPLR. At A2 the chain carries N-acetylalanine. Basic and acidic residues predominate over residues 38–48; sequence EMKCKSSKPDR. S56 is subject to Phosphoserine. The residue at position 59 (T59) is a Phosphothreonine. Residue S66 is modified to Phosphoserine. Residues 141 to 206 enclose the SEP domain; the sequence is DVQILLRLWS…MEDHQDQEYI (66 aa). S231, S234, and S235 each carry phosphoserine. Residues 252–329 form the UBX domain; sequence DSVPTTKIQI…DILNTVILQQ (78 aa).

It belongs to the NSFL1C family. In terms of assembly, interacts with VCP. Does not bind ubiquitin. Present at high level in brain. Also present in liver, kidney, spleen, testis, lung and heart (at protein level).

The protein resides in the nucleus. It localises to the cytoplasm. It is found in the cytosol. The protein localises to the endoplasmic reticulum. Its subcellular location is the golgi apparatus. The protein resides in the cytoskeleton. It localises to the microtubule organizing center. It is found in the centrosome. Functionally, adapter protein required for Golgi and endoplasmic reticulum biogenesis. Involved in Golgi and endoplasmic reticulum maintenance during interphase and in their reassembly at the end of mitosis. The complex formed with VCP has membrane fusion activity; membrane fusion activity requires USO1-GOLGA2 tethering and BET1L. VCPIP1 is also required, but not its deubiquitinating activity. Together with NSFL1C/p47, regulates the centrosomal levels of kinase AURKA/Aurora A during mitotic progression by promoting AURKA removal from centrosomes in prophase. Also, regulates spindle orientation during mitosis. The sequence is that of UBX domain-containing protein 2B (Ubxn2b) from Rattus norvegicus (Rat).